The chain runs to 212 residues: 3-isopropylmalate dehydratase small subunit (212 aa).

Belongs to the LeuD family. LeuD type 1 subfamily. Heterodimer of LeuC and LeuD.

The enzyme catalyses (2R,3S)-3-isopropylmalate = (2S)-2-isopropylmalate. The protein operates within amino-acid biosynthesis; L-leucine biosynthesis; L-leucine from 3-methyl-2-oxobutanoate: step 2/4. Its function is as follows. Catalyzes the isomerization between 2-isopropylmalate and 3-isopropylmalate, via the formation of 2-isopropylmaleate. This Nitrosomonas eutropha (strain DSM 101675 / C91 / Nm57) protein is 3-isopropylmalate dehydratase small subunit.